The primary structure comprises 299 residues: Small ribosomal subunit protein uS2 (299 aa).

The disordered stretch occupies residues 227–299; sequence SERKSEKSTK…DKAKASNEEE (73 aa).

It belongs to the universal ribosomal protein uS2 family.

The sequence is that of Small ribosomal subunit protein uS2 from Christiangramia forsetii (strain DSM 17595 / CGMCC 1.15422 / KT0803) (Gramella forsetii).